Here is a 262-residue protein sequence, read N- to C-terminus: Small ribosomal subunit protein eS4 (262 aa).

The S4 RNA-binding domain occupies 42–104 (LPLLIFLRNR…TGEFFRLIYD (63 aa)).

Belongs to the eukaryotic ribosomal protein eS4 family.

The chain is Small ribosomal subunit protein eS4 (RpS4) from Lysiphlebus testaceipes (Greenbugs aphid parastoid).